Consider the following 573-residue polypeptide: 2-succinyl-5-enolpyruvyl-6-hydroxy-3-cyclohexene-1-carboxylate synthase (573 aa).

This sequence belongs to the TPP enzyme family. MenD subfamily. As to quaternary structure, homodimer. It depends on Mg(2+) as a cofactor. Requires Mn(2+) as cofactor. The cofactor is thiamine diphosphate.

The catalysed reaction is isochorismate + 2-oxoglutarate + H(+) = 5-enolpyruvoyl-6-hydroxy-2-succinyl-cyclohex-3-ene-1-carboxylate + CO2. The protein operates within quinol/quinone metabolism; 1,4-dihydroxy-2-naphthoate biosynthesis; 1,4-dihydroxy-2-naphthoate from chorismate: step 2/7. Its pathway is quinol/quinone metabolism; menaquinone biosynthesis. In terms of biological role, catalyzes the thiamine diphosphate-dependent decarboxylation of 2-oxoglutarate and the subsequent addition of the resulting succinic semialdehyde-thiamine pyrophosphate anion to isochorismate to yield 2-succinyl-5-enolpyruvyl-6-hydroxy-3-cyclohexene-1-carboxylate (SEPHCHC). The sequence is that of 2-succinyl-5-enolpyruvyl-6-hydroxy-3-cyclohexene-1-carboxylate synthase from Shewanella sp. (strain W3-18-1).